Consider the following 312-residue polypeptide: Pyridoxal kinase (312 aa).

Met-1 is subject to N-acetylmethionine. Pyridoxal-binding residues include Ser-12 and Thr-47. Pyridoxal 5'-phosphate is bound at residue Thr-47. Ser-59 is modified (phosphoserine). Asp-113 provides a ligand contact to ATP. Asp-113 contacts Na(+). Asp-118 lines the Mg(2+) pocket. Thr-148 is a binding site for Na(+). ATP-binding positions include 150-153 (NQFE) and 186-187 (TS). Residue Thr-186 coordinates Na(+). Phosphoserine is present on Ser-213. ATP is bound by residues 226–228 (VDA) and Thr-233. 234 to 235 (GD) contacts pyridoxal 5'-phosphate. The active-site Proton acceptor is Asp-235. Position 285 is a phosphoserine (Ser-285).

This sequence belongs to the pyridoxine kinase family. As to quaternary structure, homodimer. Requires Zn(2+) as cofactor. Mg(2+) serves as cofactor.

The protein localises to the cytoplasm. It is found in the cytosol. The enzyme catalyses pyridoxal + ATP = pyridoxal 5'-phosphate + ADP + H(+). The catalysed reaction is pyridoxamine + ATP = pyridoxamine 5'-phosphate + ADP + H(+). It catalyses the reaction pyridoxine + ATP = pyridoxine 5'-phosphate + ADP + H(+). It functions in the pathway cofactor metabolism; pyridoxal 5'-phosphate salvage; pyridoxal 5'-phosphate from pyridoxal: step 1/1. It participates in cofactor metabolism; pyridoxal 5'-phosphate salvage; pyridoxine 5'-phosphate from pyridoxine: step 1/1. Its pathway is cofactor metabolism; pyridoxal 5'-phosphate salvage; pyridoxamine 5'-phosphate from pyridoxamine: step 1/1. Its activity is regulated as follows. Activity is increased in the presence of K(+)or Na(+). Functionally, catalyzes the phosphorylation of the dietary vitamin B6 vitamers pyridoxal (PL), pyridoxine (PN) and pyridoxamine (PM) to form pyridoxal 5'-phosphate (PLP), pyridoxine 5'-phosphate (PNP) and pyridoxamine 5'-phosphate (PMP), respectively. PLP is the active form of vitamin B6, and acts as a cofactor for over 140 different enzymatic reactions. This is Pyridoxal kinase (PDXK) from Bos taurus (Bovine).